An 82-amino-acid chain; its full sequence is Small ribosomal subunit protein bS16 (82 aa).

This sequence belongs to the bacterial ribosomal protein bS16 family.

The chain is Small ribosomal subunit protein bS16 from Shewanella sp. (strain MR-4).